The chain runs to 295 residues: Protease HtpX (295 aa).

The next 2 helical transmembrane spans lie at 4–24 and 42–62; these read ILLF…TLSL and QLLV…LFIS. His-147 is a binding site for Zn(2+). Residue Glu-148 is part of the active site. His-151 is a Zn(2+) binding site. The next 2 membrane-spanning stretches (helical) occupy residues 158–178 and 199–219; these read VTLA…ARII and ITTI…VMWF. Glu-224 serves as a coordination point for Zn(2+).

Belongs to the peptidase M48B family. Requires Zn(2+) as cofactor.

The protein localises to the cell inner membrane. The chain is Protease HtpX from Pseudomonas syringae pv. tomato (strain ATCC BAA-871 / DC3000).